A 295-amino-acid polypeptide reads, in one-letter code: Pyridoxal 5'-phosphate synthase subunit PdxS (295 aa).

Residue D25 coordinates D-ribose 5-phosphate. Residue K82 is the Schiff-base intermediate with D-ribose 5-phosphate of the active site. Residue G154 participates in D-ribose 5-phosphate binding. D-glyceraldehyde 3-phosphate is bound at residue R166. D-ribose 5-phosphate contacts are provided by residues G215 and G236–S237.

The protein belongs to the PdxS/SNZ family. As to quaternary structure, in the presence of PdxT, forms a dodecamer of heterodimers.

It carries out the reaction aldehydo-D-ribose 5-phosphate + D-glyceraldehyde 3-phosphate + L-glutamine = pyridoxal 5'-phosphate + L-glutamate + phosphate + 3 H2O + H(+). It functions in the pathway cofactor biosynthesis; pyridoxal 5'-phosphate biosynthesis. Functionally, catalyzes the formation of pyridoxal 5'-phosphate from ribose 5-phosphate (RBP), glyceraldehyde 3-phosphate (G3P) and ammonia. The ammonia is provided by the PdxT subunit. Can also use ribulose 5-phosphate and dihydroxyacetone phosphate as substrates, resulting from enzyme-catalyzed isomerization of RBP and G3P, respectively. This chain is Pyridoxal 5'-phosphate synthase subunit PdxS, found in Actinobacillus pleuropneumoniae serotype 5b (strain L20).